The following is a 274-amino-acid chain: MLLVLDVGNTNTVLGVFEATPAENGSYTYGRLIAHWRVGTIRTQTVDEYGVLFRNLFAMGNVDFKVIHGIIISSVVPPMDTTLRSVCERYFALKPLFVEPGVKTGMPVHYDNPSEVGADRIVNSVAAFEKYGGPCISVDFGTATTFDVVSAKGEYLGGVIAPGIGISAEALFQRTARLPRVDIKRPTKVMGTNTVNSMQSGFYWGYLGLVDGILERLVEEMGGNVKIVATGGLSPLIGAGSKYIKDVDDLLTLDGLRIIWERNQSNTRKREHGK.

Residue 6 to 13 (DVGNTNTV) coordinates ATP. Residues Tyr110 and 117-120 (GADR) each bind substrate. Residue Asp119 is the Proton acceptor of the active site. Asp139 contributes to the K(+) binding site. Thr142 is a binding site for ATP. A substrate-binding site is contributed by Thr194.

It belongs to the type III pantothenate kinase family. Homodimer. Requires NH4(+) as cofactor. The cofactor is K(+).

Its subcellular location is the cytoplasm. It catalyses the reaction (R)-pantothenate + ATP = (R)-4'-phosphopantothenate + ADP + H(+). The protein operates within cofactor biosynthesis; coenzyme A biosynthesis; CoA from (R)-pantothenate: step 1/5. Catalyzes the phosphorylation of pantothenate (Pan), the first step in CoA biosynthesis. This is Type III pantothenate kinase from Koribacter versatilis (strain Ellin345).